Reading from the N-terminus, the 486-residue chain is Aromatic-L-amino-acid decarboxylase (486 aa).

Position 1 is an N-acetylmethionine (M1). 2 consecutive repeat copies span residues 58–115 and 118–178. The segment at 58–178 is 2 X approximate tandem repeats; the sequence is QDVEKIIMPG…AASPGLTQGA (121 aa). T82 serves as a coordination point for substrate. Pyridoxal 5'-phosphate is bound by residues A148 and S149. Residue H192 coordinates substrate. Pyridoxal 5'-phosphate is bound by residues T246 and N300. At K303 the chain carries N6-(pyridoxal phosphate)lysine.

It belongs to the group II decarboxylase family. As to quaternary structure, homodimer. Requires pyridoxal 5'-phosphate as cofactor.

It carries out the reaction L-dopa + H(+) = dopamine + CO2. The catalysed reaction is 5-hydroxy-L-tryptophan + H(+) = serotonin + CO2. It functions in the pathway catecholamine biosynthesis; dopamine biosynthesis; dopamine from L-tyrosine: step 2/2. In terms of biological role, catalyzes the decarboxylation of L-3,4-dihydroxyphenylalanine (DOPA) to dopamine and L-5-hydroxytryptophan to serotonin. This is Aromatic-L-amino-acid decarboxylase (DDC) from Sus scrofa (Pig).